The following is a 215-amino-acid chain: Adenylyl-sulfate kinase (215 aa).

46–53 serves as a coordination point for ATP; sequence GLSGAGKS. The active-site Phosphoserine intermediate is the serine 120.

It belongs to the APS kinase family.

It catalyses the reaction adenosine 5'-phosphosulfate + ATP = 3'-phosphoadenylyl sulfate + ADP + H(+). It participates in sulfur metabolism; hydrogen sulfide biosynthesis; sulfite from sulfate: step 2/3. Functionally, catalyzes the synthesis of activated sulfate. In Vibrio cholerae serotype O1 (strain ATCC 39315 / El Tor Inaba N16961), this protein is Adenylyl-sulfate kinase (cysC).